The sequence spans 461 residues: Photosystem II CP43 reaction center protein (461 aa).

A propeptide spanning residues 1 to 2 is cleaved from the precursor; that stretch reads ME. The residue at position 3 (threonine 3) is an N-acetylthreonine. At threonine 3 the chain carries Phosphothreonine. The next 5 membrane-spanning stretches (helical) occupy residues 57–81, 122–143, 166–188, 243–263, and 279–300; these read LFEV…PHLA, LIGP…KDKN, KAMY…RIIT, TPWP…LSYS, and WFNN…ASQS. Glutamate 355 provides a ligand contact to [CaMn4O5] cluster. Residues 435 to 459 form a helical membrane-spanning segment; sequence RARAAAAGFEKGIDRLDEPVLSMRP.

It belongs to the PsbB/PsbC family. PsbC subfamily. As to quaternary structure, PSII is composed of 1 copy each of membrane proteins PsbA, PsbB, PsbC, PsbD, PsbE, PsbF, PsbH, PsbI, PsbJ, PsbK, PsbL, PsbM, PsbT, PsbX, PsbY, PsbZ, Psb30/Ycf12, at least 3 peripheral proteins of the oxygen-evolving complex and a large number of cofactors. It forms dimeric complexes. Binds multiple chlorophylls and provides some of the ligands for the Ca-4Mn-5O cluster of the oxygen-evolving complex. It may also provide a ligand for a Cl- that is required for oxygen evolution. PSII binds additional chlorophylls, carotenoids and specific lipids. is required as a cofactor.

It localises to the plastid. The protein localises to the chloroplast thylakoid membrane. Its function is as follows. One of the components of the core complex of photosystem II (PSII). It binds chlorophyll and helps catalyze the primary light-induced photochemical processes of PSII. PSII is a light-driven water:plastoquinone oxidoreductase, using light energy to abstract electrons from H(2)O, generating O(2) and a proton gradient subsequently used for ATP formation. The sequence is that of Photosystem II CP43 reaction center protein from Tetradesmus obliquus (Green alga).